Reading from the N-terminus, the 616-residue chain is MPKYRSATTTHGRNMAGARALWRATGMTDADFGKPIIAVVNSFTQFVPGHVHLRDLGKLVAEQIEAAGGVAKEFNTIAVDDGIAMGHGGMLYSLPSRELIADSVEYMVNAHCADAMVCISNCDKITPGMLMASLRLNIPVIFVSGGPMEAGKTKLSDQIIKLDLVDAMIQGADPKVSDSQSDQVERSACPTCGSCSGMFTANSMNCLTEALGLSQPGNGSLLATHSDRKQLFLNAGKRIVELTKRYYEQNDESALPRNIASKAAFENAMTLDIAMGGSTNTVLHLLAAAQEAEIDFTMSDIDKLSRKVPQLCKVAPSTQKYHMEDVHRAGGVIGILGELDRAGLLNRDVKNVLGLTLPQTLEQYDVMLTQDDAVKNMFRAGPAGIRTTQAFSQDCRWDTLDDDRANGCIRSLEHAYSKDGGLAVLYGNFAENGCIVKTAGVDDSILKFTGPAKVYESQDDAVEAILGGKVVAGDVVVIRYEGPKGGPGMQEMLYPTSFLKSMGLGKACALITDGRFSGGTSGLSIGHVSPEAASGGSIGLIEDGDLIAIDIPNRGIQLQVSDAELAARREAQEARGDKAWTPKNRERQISFALRAYASLATSADKGAVRDKSKLGG.

Asp81 contacts Mg(2+). Cys122 lines the [2Fe-2S] cluster pocket. Positions 123 and 124 each coordinate Mg(2+). An N6-carboxylysine modification is found at Lys124. Residue Cys195 coordinates [2Fe-2S] cluster. Glu491 is a Mg(2+) binding site. Ser517 (proton acceptor) is an active-site residue.

The protein belongs to the IlvD/Edd family. Homodimer. [2Fe-2S] cluster serves as cofactor. Requires Mg(2+) as cofactor.

The enzyme catalyses (2R)-2,3-dihydroxy-3-methylbutanoate = 3-methyl-2-oxobutanoate + H2O. It carries out the reaction (2R,3R)-2,3-dihydroxy-3-methylpentanoate = (S)-3-methyl-2-oxopentanoate + H2O. The protein operates within amino-acid biosynthesis; L-isoleucine biosynthesis; L-isoleucine from 2-oxobutanoate: step 3/4. It participates in amino-acid biosynthesis; L-valine biosynthesis; L-valine from pyruvate: step 3/4. Functions in the biosynthesis of branched-chain amino acids. Catalyzes the dehydration of (2R,3R)-2,3-dihydroxy-3-methylpentanoate (2,3-dihydroxy-3-methylvalerate) into 2-oxo-3-methylpentanoate (2-oxo-3-methylvalerate) and of (2R)-2,3-dihydroxy-3-methylbutanoate (2,3-dihydroxyisovalerate) into 2-oxo-3-methylbutanoate (2-oxoisovalerate), the penultimate precursor to L-isoleucine and L-valine, respectively. The protein is Dihydroxy-acid dehydratase of Escherichia coli O157:H7 (strain EC4115 / EHEC).